A 164-amino-acid chain; its full sequence is N5-carboxyaminoimidazole ribonucleotide mutase (164 aa).

The substrate site is built by Ser-13, Asp-16, and Arg-43.

This sequence belongs to the AIR carboxylase family. Class I subfamily.

The enzyme catalyses 5-carboxyamino-1-(5-phospho-D-ribosyl)imidazole + H(+) = 5-amino-1-(5-phospho-D-ribosyl)imidazole-4-carboxylate. The protein operates within purine metabolism; IMP biosynthesis via de novo pathway; 5-amino-1-(5-phospho-D-ribosyl)imidazole-4-carboxylate from 5-amino-1-(5-phospho-D-ribosyl)imidazole (N5-CAIR route): step 2/2. Its function is as follows. Catalyzes the conversion of N5-carboxyaminoimidazole ribonucleotide (N5-CAIR) to 4-carboxy-5-aminoimidazole ribonucleotide (CAIR). This is N5-carboxyaminoimidazole ribonucleotide mutase from Haemophilus influenzae (strain ATCC 51907 / DSM 11121 / KW20 / Rd).